We begin with the raw amino-acid sequence, 154 residues long: Protein FasC (154 aa).

It belongs to the periplasmic pilus chaperone family.

Functionally, could be required for the biogenesis of a putative fimbria. This chain is Protein FasC (fasC), found in Escherichia coli.